We begin with the raw amino-acid sequence, 364 residues long: S-adenosylmethionine:tRNA ribosyltransferase-isomerase (364 aa).

This sequence belongs to the QueA family. As to quaternary structure, monomer.

The protein resides in the cytoplasm. The enzyme catalyses 7-aminomethyl-7-carbaguanosine(34) in tRNA + S-adenosyl-L-methionine = epoxyqueuosine(34) in tRNA + adenine + L-methionine + 2 H(+). The protein operates within tRNA modification; tRNA-queuosine biosynthesis. Its function is as follows. Transfers and isomerizes the ribose moiety from AdoMet to the 7-aminomethyl group of 7-deazaguanine (preQ1-tRNA) to give epoxyqueuosine (oQ-tRNA). The protein is S-adenosylmethionine:tRNA ribosyltransferase-isomerase of Synechococcus sp. (strain CC9902).